We begin with the raw amino-acid sequence, 944 residues long: Protein translocase subunit SecA (944 aa).

ATP-binding positions include Gln77, Gly95–Thr99, and Asp484. The disordered stretch occupies residues Glu920–Gly944. A compositionally biased stretch (basic and acidic residues) spans Pro933 to Gly944.

Belongs to the SecA family. Monomer and homodimer. Part of the essential Sec protein translocation apparatus which comprises SecA, SecYEG and auxiliary proteins SecDF. Other proteins may also be involved.

It localises to the cell membrane. Its subcellular location is the cytoplasm. It catalyses the reaction ATP + H2O + cellular proteinSide 1 = ADP + phosphate + cellular proteinSide 2.. Functionally, part of the Sec protein translocase complex. Interacts with the SecYEG preprotein conducting channel. Has a central role in coupling the hydrolysis of ATP to the transfer of proteins into and across the cell membrane, serving as an ATP-driven molecular motor driving the stepwise translocation of polypeptide chains across the membrane. The sequence is that of Protein translocase subunit SecA from Mycoplasma mycoides subsp. mycoides SC (strain CCUG 32753 / NCTC 10114 / PG1).